The primary structure comprises 700 residues: Phenoloxidase 8 (700 aa).

Residues 1-51 (MATLTQKFHGLLQHPLEPLFLPKNDGTLFYDLPERFLTSRYSPIGQNLANR) constitute a propeptide that is removed on maturation. Asparagine 64 and asparagine 198 each carry an N-linked (GlcNAc...) asparagine glycan. Histidine 223, histidine 227, and histidine 252 together coordinate Cu cation. The N-linked (GlcNAc...) asparagine glycan is linked to asparagine 295. The active-site Proton acceptor is glutamate 364. Cu cation-binding residues include histidine 379, histidine 383, and histidine 419. Asparagine 445, asparagine 507, and asparagine 565 each carry an N-linked (GlcNAc...) asparagine glycan. 2 disulfide bridges follow: cysteine 592-cysteine 636 and cysteine 594-cysteine 643.

The protein belongs to the tyrosinase family. Homodimer. Requires Cu(2+) as cofactor. Upon activation, a trypsin type protease cleaves prophenol oxidase to yield the active enzyme.

It localises to the secreted. The enzyme catalyses 2 tyramine + O2 = 2 dopamine. The catalysed reaction is 2 dopamine + O2 = 2 dopamine quinone + 2 H2O. Its function is as follows. This is a copper-containing oxidase that functions in the formation of pigments such as melanins and other polyphenolic compounds. Catalyzes the oxidation of o-diphenols such as dopamine. Also oxidizes monophenols such as tyramine. The sequence is that of Phenoloxidase 8 from Anopheles gambiae (African malaria mosquito).